Consider the following 676-residue polypeptide: F420-dependent formate dehydrogenase 2 subunit alpha (676 aa).

One can recognise a 4Fe-4S Mo/W bis-MGD-type domain in the interval 4–60 (FKVVHTICPYCGTGCGIDLVVKDGKVVDSHPFKRHPVNEGKVCIKGNYCYEFVHSED). [4Fe-4S] cluster-binding residues include Cys11, Cys14, Cys18, and Cys46. Residue Sec133 is a non-standard amino acid, selenocysteine.

Belongs to the prokaryotic molybdopterin-containing oxidoreductase family. In terms of assembly, dimer of an alpha (FdhA2) and a beta (FdhB2) subunit. The cofactor is [4Fe-4S] cluster. Requires Mo-bis(molybdopterin guanine dinucleotide) as cofactor. Zn(2+) is required as a cofactor.

The catalysed reaction is oxidized coenzyme F420-(gamma-L-Glu)(n) + formate + 2 H(+) = reduced coenzyme F420-(gamma-L-Glu)(n) + CO2. In terms of biological role, catalyzes the oxidation of formate to carbon dioxide, with coenzyme F420 as the electron acceptor. In vitro can also use methyl viologen as electron acceptor. This Methanococcus maripaludis (strain DSM 14266 / JCM 13030 / NBRC 101832 / S2 / LL) protein is F420-dependent formate dehydrogenase 2 subunit alpha.